Reading from the N-terminus, the 659-residue chain is Macrolide export ATP-binding/permease protein MacB (659 aa).

Residues I10 to S249 form the ABC transporter domain. G47 to S54 is an ATP binding site. The next 4 helical transmembrane spans lie at S287–G307, L538–L558, I594–W614, and V619–F639.

The protein belongs to the ABC transporter superfamily. Macrolide exporter (TC 3.A.1.122) family. As to quaternary structure, homodimer.

The protein localises to the cell inner membrane. Its function is as follows. Non-canonical ABC transporter that contains transmembrane domains (TMD), which form a pore in the inner membrane, and an ATP-binding domain (NBD), which is responsible for energy generation. Confers resistance against macrolides. The protein is Macrolide export ATP-binding/permease protein MacB of Nitrosomonas europaea (strain ATCC 19718 / CIP 103999 / KCTC 2705 / NBRC 14298).